Consider the following 841-residue polypeptide: Protein translocase subunit SecA (841 aa).

ATP is bound by residues Gln85, 103 to 107 (GEGKT), and Asp492. Positions 786-812 (REEVVQGQTTAHQPQDGDEAKQAKKAP) are disordered. Positions 825, 827, 836, and 837 each coordinate Zn(2+).

The protein belongs to the SecA family. In terms of assembly, monomer and homodimer. Part of the essential Sec protein translocation apparatus which comprises SecA, SecYEG and auxiliary proteins SecDF. Other proteins may also be involved. It depends on Zn(2+) as a cofactor.

Its subcellular location is the cell membrane. It localises to the cytoplasm. The enzyme catalyses ATP + H2O + cellular proteinSide 1 = ADP + phosphate + cellular proteinSide 2.. Part of the Sec protein translocase complex. Interacts with the SecYEG preprotein conducting channel. Has a central role in coupling the hydrolysis of ATP to the transfer of proteins into and across the cell membrane, serving as an ATP-driven molecular motor driving the stepwise translocation of polypeptide chains across the membrane. This chain is Protein translocase subunit SecA, found in Bacillus velezensis (strain DSM 23117 / BGSC 10A6 / LMG 26770 / FZB42) (Bacillus amyloliquefaciens subsp. plantarum).